We begin with the raw amino-acid sequence, 466 residues long: Asparagine--tRNA ligase (466 aa).

Belongs to the class-II aminoacyl-tRNA synthetase family. In terms of assembly, homodimer.

It is found in the cytoplasm. It carries out the reaction tRNA(Asn) + L-asparagine + ATP = L-asparaginyl-tRNA(Asn) + AMP + diphosphate + H(+). This is Asparagine--tRNA ligase from Aeromonas hydrophila subsp. hydrophila (strain ATCC 7966 / DSM 30187 / BCRC 13018 / CCUG 14551 / JCM 1027 / KCTC 2358 / NCIMB 9240 / NCTC 8049).